Here is a 268-residue protein sequence, read N- to C-terminus: Putative hydro-lyase A1S_1268 (268 aa).

This sequence belongs to the D-glutamate cyclase family.

The chain is Putative hydro-lyase A1S_1268 from Acinetobacter baumannii (strain ATCC 17978 / DSM 105126 / CIP 53.77 / LMG 1025 / NCDC KC755 / 5377).